The chain runs to 257 residues: AN1-type zinc finger protein 2B (257 aa).

2 consecutive AN1-type zinc fingers follow at residues 4–52 and 94–142; these read PDLG…QKDI and KIFT…HQTS. The Zn(2+) site is built by Cys10, Cys15, Cys25, Cys28, Cys33, His36, His42, Cys44, Cys100, Cys105, Cys115, Cys118, Cys123, His126, His132, and Cys134. Residues 141–151 are VCP/p97-interacting motif (VIM); sequence TSRAGLAAISR. The disordered stretch occupies residues 152 to 184; sequence AQGLASTSTAPSPSRTLPSSSSPSRATPQLPTR. Low complexity predominate over residues 155 to 179; the sequence is LASTSTAPSPSRTLPSSSSPSRATP. Ser163, Ser173, and Ser187 each carry phosphoserine; by MAPK14. 2 UIM domains span residues 197–216 and 221–240; these read SEDEALQRALELSLAEAKPQ and QEEDDLALAQALSASEAEYQ. A Cysteine methyl ester modification is found at Cys254. Cys254 is lipidated: S-geranylgeranyl cysteine. The short motif at 254 to 257 is the CAAX motif element; sequence CSLC. Positions 255–257 are cleaved as a propeptide — removed in mature form; that stretch reads SLC.

Binds 'Lys-48'-linked polyubiquitin chains of ubiquitinated proteins. Associates with the proteasome complex; upon exposure to arsenite. Interacts (via VIM motif) with VCP; the interaction is direct. Interacts with BAG6. Interacts with IGF1R (nascent precursor form). Interacts with DERL1, FAF2, NPLOC4 and UFD1; probably through VCP. In terms of processing, phosphorylated by MAPK14. Phosphorylation has no effect on association with the proteasome complex.

The protein localises to the endoplasmic reticulum membrane. Functionally, plays a role in protein homeostasis by regulating both the translocation and the ubiquitin-mediated proteasomal degradation of nascent proteins at the endoplasmic reticulum. It is involved in the regulation of signal-mediated translocation of proteins into the endoplasmic reticulum. It also plays a role in the ubiquitin-mediated proteasomal degradation of proteins for which signal-mediated translocation to the endoplasmic reticulum has failed. May therefore function in the endoplasmic reticulum stress-induced pre-emptive quality control, a mechanism that selectively attenuates the translocation of newly synthesized proteins into the endoplasmic reticulum and reroutes them to the cytosol for proteasomal degradation. By controlling the steady-state expression of the IGF1R receptor, indirectly regulates the insulin-like growth factor receptor signaling pathway. The protein is AN1-type zinc finger protein 2B of Mus musculus (Mouse).